The chain runs to 395 residues: E3 ubiquitin-protein ligase RDUF1 (395 aa).

2 disordered regions span residues 1-22 (MMPNSRSATITPTTESTTTTTT) and 107-130 (PVIVLHGGGGGGAGERVENEEGDG). Low complexity predominate over residues 9–22 (TITPTTESTTTTTT). A compositionally biased stretch (basic and acidic residues) spans 121-130 (ERVENEEGDG). Residues 215 to 256 (CAVCTEVFEAGIEGREMPCKHIFHGDCIVPWLSIRNSCPVCR) form an RING-type; atypical zinc finger.

Expressed in root tips, leaf tips, junction of carpels and pedicels, stigma, anthers, pollen, vasculature of sepals and petals, immature seeds and embryos.

The protein localises to the cytoplasm. It localises to the cytosol. It is found in the nucleus. It catalyses the reaction S-ubiquitinyl-[E2 ubiquitin-conjugating enzyme]-L-cysteine + [acceptor protein]-L-lysine = [E2 ubiquitin-conjugating enzyme]-L-cysteine + N(6)-ubiquitinyl-[acceptor protein]-L-lysine.. Its pathway is protein modification; protein ubiquitination. Functionally, E3 ubiquitin-protein ligase involved in the positive regulation of abscisic acid-dependent drought stress responses. Involved in the positive regulation of responses to salt and osmotic stresses during seed germination and early seedling development. Possesses E3 ubiquitin ligase activity in vitro. This Arabidopsis thaliana (Mouse-ear cress) protein is E3 ubiquitin-protein ligase RDUF1.